The following is an 801-amino-acid chain: Cadherin-20 (801 aa).

The signal sequence occupies residues 1–34 (MWTTGRMSNAKSWLGLGTSLYFWALMDLTATVLS). A propeptide spanning residues 35–59 (STPMPEVELETLFSGRSQSHQRSKR) is cleaved from the precursor. The Extracellular segment spans residues 60 to 619 (SWVWNQFFVL…AYLLPVSLSR (560 aa)). Cadherin domains lie at 61–165 (WVWN…EPKF), 166–274 (LDGP…PPRF), 275–389 (PQKH…PPVF), 390–494 (EPGF…APEF), and 494–610 (FPRF…SPEA). The N-linked (GlcNAc...) asparagine glycan is linked to asparagine 261. 3 N-linked (GlcNAc...) asparagine glycosylation sites follow: asparagine 420, asparagine 461, and asparagine 542. The helical transmembrane segment at 620 to 640 (GALIAILACIFVLLVLVLLIL) threads the bilayer. The Cytoplasmic segment spans residues 641-801 (SMRRHRKQPY…GASEGPAPLW (161 aa)).

As to expression, expressed in brain. Highest level of expression in the retina. In embryo it is synthesized by the forebrain, anterior neural ridge, developing visual system, primitive external granular layer of the cerebellum and a subset of neural crest cells likely to develop into melanoblasts.

The protein resides in the cell membrane. In terms of biological role, cadherins are calcium-dependent cell adhesion proteins. They preferentially interact with themselves in a homophilic manner in connecting cells; cadherins may thus contribute to the sorting of heterogeneous cell types. The protein is Cadherin-20 (Cdh20) of Mus musculus (Mouse).